Reading from the N-terminus, the 165-residue chain is RNA pyrophosphohydrolase (165 aa).

The Nudix hydrolase domain maps to 13 to 154 (PYRQGVGIML…KRPVYEQVVA (142 aa)). The short motif at 46–67 (GGIDAGEDPETAAWREMEEEIG) is the Nudix box element.

It belongs to the Nudix hydrolase family. RppH subfamily. A divalent metal cation is required as a cofactor.

In terms of biological role, accelerates the degradation of transcripts by removing pyrophosphate from the 5'-end of triphosphorylated RNA, leading to a more labile monophosphorylated state that can stimulate subsequent ribonuclease cleavage. This Rhodospirillum rubrum (strain ATCC 11170 / ATH 1.1.1 / DSM 467 / LMG 4362 / NCIMB 8255 / S1) protein is RNA pyrophosphohydrolase.